The sequence spans 285 residues: Tryptophan synthase alpha chain (285 aa).

Active-site proton acceptor residues include E53 and D64.

This sequence belongs to the TrpA family. As to quaternary structure, tetramer of two alpha and two beta chains.

The catalysed reaction is (1S,2R)-1-C-(indol-3-yl)glycerol 3-phosphate + L-serine = D-glyceraldehyde 3-phosphate + L-tryptophan + H2O. It functions in the pathway amino-acid biosynthesis; L-tryptophan biosynthesis; L-tryptophan from chorismate: step 5/5. In terms of biological role, the alpha subunit is responsible for the aldol cleavage of indoleglycerol phosphate to indole and glyceraldehyde 3-phosphate. The sequence is that of Tryptophan synthase alpha chain from Bordetella parapertussis (strain 12822 / ATCC BAA-587 / NCTC 13253).